The chain runs to 103 residues: Large ribosomal subunit protein bL21 (103 aa).

This sequence belongs to the bacterial ribosomal protein bL21 family. In terms of assembly, part of the 50S ribosomal subunit. Contacts protein L20.

This protein binds to 23S rRNA in the presence of protein L20. The polypeptide is Large ribosomal subunit protein bL21 (Vesicomyosocius okutanii subsp. Calyptogena okutanii (strain HA)).